The primary structure comprises 325 residues: Phenylalanine--tRNA ligase alpha subunit (325 aa).

Glu-251 contributes to the Mg(2+) binding site.

Belongs to the class-II aminoacyl-tRNA synthetase family. Phe-tRNA synthetase alpha subunit type 1 subfamily. In terms of assembly, tetramer of two alpha and two beta subunits. Mg(2+) serves as cofactor.

It is found in the cytoplasm. It carries out the reaction tRNA(Phe) + L-phenylalanine + ATP = L-phenylalanyl-tRNA(Phe) + AMP + diphosphate + H(+). The protein is Phenylalanine--tRNA ligase alpha subunit of Thermotoga neapolitana (strain ATCC 49049 / DSM 4359 / NBRC 107923 / NS-E).